Here is a 1345-residue protein sequence, read N- to C-terminus: Vascular endothelial growth factor receptor 2 (1345 aa).

An N-terminal signal peptide occupies residues 1 to 19; sequence MESKALLAVALWFCVETRA. At 20-762 the chain is on the extracellular side; the sequence is ASVGLPGDFL…EGAQEKTNLE (743 aa). Residues asparagine 46, asparagine 98, asparagine 145, asparagine 160, and asparagine 247 are each glycosylated (N-linked (GlcNAc...) asparagine). Ig-like C2-type domains are found at residues 46-111, 143-209, 226-325, 330-416, 423-542, 549-656, and 665-751; these read NTTL…RDVD, NKNK…INDE, YDVI…TFVR, PFIA…HMVS, PQIG…RVIS, PEIT…LVKQ, and PMIT…TLFI. The cysteines at positions 53 and 105 are disulfide-linked. Cysteines 152 and 202 form a disulfide. Cysteine 248 and cysteine 309 form a disulfide bridge. Asparagine 320, asparagine 376, asparagine 397, asparagine 509, asparagine 521, asparagine 578, asparagine 611, asparagine 617, asparagine 629, asparagine 673, asparagine 702, and asparagine 719 each carry an N-linked (GlcNAc...) asparagine glycan. Cystine bridges form between cysteine 447-cysteine 528 and cysteine 569-cysteine 640. The cysteines at positions 686 and 735 are disulfide-linked. A helical membrane pass occupies residues 763-783; sequence VIILVGTAVIAMFFWLLLVIV. Topologically, residues 784-1345 are cytoplasmic; it reads LRTVKRANEG…SGTTLRSPPV (562 aa). The residue at position 799 (tyrosine 799) is a Phosphotyrosine. The Protein kinase domain occupies 832–1160; it reads LKLGKPLGRG…FSELVEHLGN (329 aa). Residues 838-846 and lysine 866 contribute to the ATP site; that span reads LGRGAFGQV. At tyrosine 949 the chain carries Phosphotyrosine; by autocatalysis. A phosphoserine mark is found at serine 980 and serine 982. A Phosphotyrosine; by autocatalysis modification is found at tyrosine 994. A disulfide bridge connects residues cysteine 1022 and cysteine 1043. The Proton acceptor role is filled by aspartate 1026. A phosphotyrosine; by autocatalysis mark is found at tyrosine 1052, tyrosine 1057, tyrosine 1173, and tyrosine 1212. A phosphoserine mark is found at serine 1229 and serine 1233. Phosphothreonine is present on threonine 1236. Residues 1272-1316 are disordered; the sequence is DRNKLSPSFGGMMPSKSRESVASEGSNQTSGYQSGYHSDDTDTTV. Positions 1294 to 1307 are enriched in polar residues; sequence SEGSNQTSGYQSGY. 3 positions are modified to phosphotyrosine; by autocatalysis: tyrosine 1303, tyrosine 1307, and tyrosine 1317.

It belongs to the protein kinase superfamily. Tyr protein kinase family. CSF-1/PDGF receptor subfamily. Homodimer in the presence of bound dimeric VEGFA, VEGFC or VEGFD ligands; monomeric in the absence of bound ligands. Can also form heterodimers with FLT1/VEGFR1 and KDR/VEGFR2. Interacts (tyrosine phosphorylated) with LFYN, NCK1, PLCG1. Interacts (tyrosine-phosphorylated active form preferentially) with DAB2IP (via C2 domain and active form preferentially); the interaction occurs at the late phase of VEGFA response and inhibits KDR/VEGFR2 activity. Interacts with SHBSH2D2A/TSAD, GRB2, MYOF, CBL and PDCD6. Interacts (via C-terminus domain) with ERN1 (via kinase domain); the interaction is facilitated in a XBP1 isoform 1- and vascular endothelial growth factor (VEGF)-dependent manner in endothelial cells. Interacts (via juxtamembrane region) with chaperone PDCL3 (via thioredoxin fold region); the interaction leads to increased KDR/VEGFR2 abundance through inhibition of its ubiquitination and degradation. Interacts (tyrosine phosphorylated) with CCDC88A/GIV (via SH2-like region); binding requires autophosphorylation of the KDR/VEGFR2 C-terminal region. Interacts with isoform 2 of BSG. Interacts with SLC31A1; this interaction is induced upon VEGFA stimulation leading to SLC31A1 and KDR subsequent co-internalization to early endosomes, thereby activating KDR downstream signaling in endothelial cells. In terms of processing, N-glycosylated. Post-translationally, ubiquitinated. Tyrosine phosphorylation of the receptor promotes its poly-ubiquitination, leading to its degradation via the proteasome or lysosomal proteases. Autophosphorylated on tyrosine residues upon ligand binding. Autophosphorylation occurs in trans, i.e. one subunit of the dimeric receptor phosphorylates tyrosine residues on the other subunit. Phosphorylation at Tyr-949 is important for interaction with SH2D2A/TSAD and VEGFA-mediated reorganization of the actin cytoskeleton. Phosphorylation at Tyr-1173 is important for interaction with PLCG1 and SHB. Phosphorylation at Tyr-1212 is important for interaction with NCK1 and FYN. Dephosphorylated by PTPRJ at Tyr-799, Tyr-949, Tyr-994, Tyr-1052, Tyr-1057, Tyr-1173 and Tyr-1212. In terms of processing, the inhibitory disulfide bond between Cys-1022 and Cys-1043 may serve as a specific molecular switch for H(2)S-induced modification that regulates KDR/VEGFR2 function. In terms of tissue distribution, expressed in endothelial cells (at protein level). Detected in embryonic endothelial cells, as well as hematopoietic stem and progenitor cells. Detected in vascular endothelium. Expressed at high levels in adult heart, lung, kidney, brain and skeletal muscle, but is also expressed at lower levels in most other adult tissues.

It is found in the cell junction. Its subcellular location is the endoplasmic reticulum. It localises to the cell membrane. The protein localises to the cytoplasm. The protein resides in the nucleus. It is found in the cytoplasmic vesicle. Its subcellular location is the early endosome. It localises to the secreted. It catalyses the reaction L-tyrosyl-[protein] + ATP = O-phospho-L-tyrosyl-[protein] + ADP + H(+). With respect to regulation, present in an inactive conformation in the absence of bound ligand. Binding of VEGFA, VEGFC or VEGFD leads to dimerization and activation by autophosphorylation on tyrosine residues. May be regulated by hydrogen sulfide (H(2)S) levels via a sensitive intracellular disulfide bond. Functionally, tyrosine-protein kinase that acts as a cell-surface receptor for VEGFA, VEGFC and VEGFD. Plays an essential role in the regulation of angiogenesis, vascular development, vascular permeability, and embryonic hematopoiesis. Promotes proliferation, survival, migration and differentiation of endothelial cells. Promotes reorganization of the actin cytoskeleton. Isoforms lacking a transmembrane domain, such as isoform 2, may function as decoy receptors for VEGFA, VEGFC and/or VEGFD. Isoform 2 plays an important role as a negative regulator of VEGFA- and VEGFC-mediated lymphangiogenesis by limiting the amount of free VEGFA and/or VEGFC and by preventing their binding to FLT4. Modulates FLT1 and FLT4 signaling by forming heterodimers. Binding of vascular growth factors to isoform 1 leads to the activation of several signaling cascades. Activation of PLCG1 leads to the production of the cellular signaling molecules diacylglycerol and inositol 1,4,5-trisphosphate and the activation of protein kinase C. Mediates activation of MAPK1/ERK2, MAPK3/ERK1 and the MAP kinase signaling pathway, as well as of the AKT1 signaling pathway. Mediates phosphorylation of PIK3R1, the regulatory subunit of phosphatidylinositol 3-kinase, reorganization of the actin cytoskeleton and activation of PTK2/FAK1. Required for VEGFA-mediated induction of NOS2 and NOS3, leading to the production of the signaling molecule nitric oxide (NO) by endothelial cells. Phosphorylates PLCG1. Promotes phosphorylation of FYN, NCK1, NOS3, PIK3R1, PTK2/FAK1 and SRC. The polypeptide is Vascular endothelial growth factor receptor 2 (Mus musculus (Mouse)).